A 324-amino-acid polypeptide reads, in one-letter code: HSF-like protein (324 aa).

A signal peptide spans 1–19 (MNSLVALVLLGQIIGSTVS). Cystatin fetuin-A-type domains are found at residues 21-130 (QLGP…VKCS) and 141-254 (RDCP…SDCV). 6 disulfide bridges follow: C28-C315, C85-C96, C110-C129, C143-C146, C205-C217, and C230-C253. N95 carries N-linked (GlcNAc...) asparagine glycosylation. Residue N204 is glycosylated (N-linked (GlcNAc...) asparagine). Residue N282 is glycosylated (N-linked (GlcNAc...) asparagine).

The protein belongs to the fetuin family. As to quaternary structure, homodimer. As to expression, expressed by the liver.

Its subcellular location is the secreted. In terms of biological role, may not have antihemorrhagic activity. The protein is HSF-like protein of Protobothrops flavoviridis (Habu).